The chain runs to 238 residues: Aspartate/glutamate leucyltransferase (238 aa).

The protein belongs to the R-transferase family. Bpt subfamily.

It is found in the cytoplasm. The enzyme catalyses N-terminal L-glutamyl-[protein] + L-leucyl-tRNA(Leu) = N-terminal L-leucyl-L-glutamyl-[protein] + tRNA(Leu) + H(+). The catalysed reaction is N-terminal L-aspartyl-[protein] + L-leucyl-tRNA(Leu) = N-terminal L-leucyl-L-aspartyl-[protein] + tRNA(Leu) + H(+). In terms of biological role, functions in the N-end rule pathway of protein degradation where it conjugates Leu from its aminoacyl-tRNA to the N-termini of proteins containing an N-terminal aspartate or glutamate. The protein is Aspartate/glutamate leucyltransferase of Shewanella oneidensis (strain ATCC 700550 / JCM 31522 / CIP 106686 / LMG 19005 / NCIMB 14063 / MR-1).